A 523-amino-acid polypeptide reads, in one-letter code: MSEQLQPQQSMNAADEIIGRPLAQGLGEQTAMLCAERSITYRELDAATNRHGNALRAHGVGKGDRVLFLMDDSPELVAAYLGTLRIGAVAVALNVRLAPRDVLYVIQDSACRLLYIDAEFLHLYQQIAGELEQPPQVVVRGDEAPAPAIIAFKHFLDGQAATLESVQVAPDDVAYWLYSSGTTGRPKAVMHAHRSVLIADRLEREYFGIKPGDRVFTTSKMFFGWSLGHSLMGGLQCGATVIVAPGWPDAERVMATAARHRPTILFSTPVMYRNLLREGAGESAAMRDIRHFVSAGEKLPENIGQQWLDTFGIPITEGIGASETVFLFLCARPDAYRIGSCGKRVPWAEVRLLDELGNEITTPDTPGLIAIRMASQFVGYWKLPETTEKALRDGWYYPGDMFSFDADGFWYHNGRADDMLKISGQWVSPGEIESCASAVPGIAEAVVVAVPNDDGLTRLTLFIVPEDPSASQQKLSEAWMTTLRGTLSIYKCPRTIQFLEELPRTATGKVQKYRLRDMLQATL.

It belongs to the ATP-dependent AMP-binding enzyme family. Benzoate-CoA ligase subfamily.

The catalysed reaction is 4-hydroxybenzoate + ATP + CoA = 4-hydroxybenzoyl-CoA + AMP + diphosphate. The enzyme catalyses 3-hydroxybenzoate + ATP + CoA = 3-hydroxybenzoyl-CoA + AMP + diphosphate. Catalyzes the ligation of 3-hydroxybenzoate or 4-hydroxybenzoate and CoA at the expense of ATP. The enzyme shows low activity towards benzoate, 4-aminobenzoate, 3-aminobenzoate, 3-fluorobenzoate, 4-fluorobenzoate, 3-chlorobenzoate, and 4-chlorobenzoate. There is no activity with 3,4-dihydroxybenzoate, 2,3-dihydroxybenzoate, and 2-hydroxybenzoate as substrates. This chain is 3-hydroxybenzoate--CoA/4-hydroxybenzoate--CoA ligase (hcl), found in Thauera aromatica.